Here is a 277-residue protein sequence, read N- to C-terminus: S-formylglutathione hydrolase FrmB (277 aa).

Catalysis depends on charge relay system residues Ser145, Asp221, and His254.

The protein belongs to the esterase D family.

The catalysed reaction is S-formylglutathione + H2O = formate + glutathione + H(+). Serine hydrolase involved in the detoxification of formaldehyde. Hydrolyzes S-formylglutathione to glutathione and formate. The polypeptide is S-formylglutathione hydrolase FrmB (frmB) (Escherichia coli O9:H4 (strain HS)).